Here is a 1914-residue protein sequence, read N- to C-terminus: Diacylglycerol kinase eta (1914 aa).

A compositionally biased stretch (basic and acidic residues) spans 1–10 (MSHLKLDTLH). Positions 1-37 (MSHLKLDTLHVQRSPRGSRRSSRSSGRSSACSSGSIS) are disordered. The span at 23–37 (RSSGRSSACSSGSIS) shows a compositional bias: low complexity. Positions 82-175 (AIIKEGFLLK…WLGSLKTATA (94 aa)) constitute a PH domain. 2 consecutive Phorbol-ester/DAG-type zinc fingers follow at residues 195–245 (HHHW…IANC) and 268–319 (PHQW…AVAC). Residues 350 to 486 (GNFSPLLVFV…DRWSIMVFEK (137 aa)) form the DAGKc domain. Disordered stretches follow at residues 621–642 (EKDQ…SEKE), 783–805 (GANI…NTPT), 1016–1053 (TLCS…PPRI), 1116–1135 (QHRG…TPTN), and 1175–1216 (PNTI…TVSL). The span at 1175-1187 (PNTILTTSTSPTK) shows a compositional bias: polar residues. The 64-residue stretch at 1851–1914 (WSVNEVVTWL…LQAIKDLSEN (64 aa)) folds into the SAM domain.

This sequence belongs to the eukaryotic diacylglycerol kinase family.

It is found in the cytoplasm. It carries out the reaction a 1,2-diacyl-sn-glycerol + ATP = a 1,2-diacyl-sn-glycero-3-phosphate + ADP + H(+). Functionally, phosphorylates diacylglycerol (DAG) to generate phosphatidic acid (PA). The polypeptide is Diacylglycerol kinase eta (Drosophila sechellia (Fruit fly)).